Consider the following 1300-residue polypeptide: Insulin receptor-related protein (1300 aa).

Residues 1 to 26 (MARPKLWPWGILLLVSLLSAGFNLDT) form the signal peptide. Asn-47 is a glycosylation site (N-linked (GlcNAc...) asparagine). Disulfide bonds link Cys-214–Cys-222, Cys-216–Cys-228, Cys-229–Cys-237, Cys-233–Cys-246, Cys-249–Cys-258, Cys-262–Cys-274, Cys-280–Cys-300, Cys-304–Cys-317, and Cys-320–Cys-324. Residue Asn-311 is glycosylated (N-linked (GlcNAc...) asparagine). N-linked (GlcNAc...) asparagine glycosylation is found at Asn-411, Asn-492, Asn-528, Asn-616, Asn-634, Asn-756, Asn-885, and Asn-898. 2 Fibronectin type-III domains span residues 483 to 603 (QTRT…TLPA) and 607 to 707 (VPQD…AQEA). Cys-657 and Cys-864 form a disulfide bridge. Residues 740-762 (DAGRHRRAIGSPRPGGNSSDFEI) are disordered. The Extracellular segment spans residues 747–921 (AIGSPRPGGN…PEEEDSGGLH (175 aa)). Residues 818-912 (IPGKLSWEAA…DSVAFYIPGP (95 aa)) enclose the Fibronectin type-III 3 domain. A helical transmembrane segment spans residues 922-943 (ILLTVTPAGLMLLIILAALGFF). Residues 944–1300 (YSRKRNGTLY…CSLQNGGPEH (357 aa)) lie on the Cytoplasmic side of the membrane. One can recognise a Protein kinase domain in the interval 979-1254 (ISIIRELGQG…SIQKELRPSF (276 aa)). ATP contacts are provided by residues 985–993 (LGQGSFGMV) and Lys-1013. Catalysis depends on Asp-1115, which acts as the Proton acceptor. A phosphotyrosine; by autocatalysis mark is found at Tyr-1145 and Tyr-1146. The disordered stretch occupies residues 1270-1300 (GLQPTTDAESSSPPTSKGASDCSLQNGGPEH). A compositionally biased stretch (polar residues) spans 1272-1300 (QPTTDAESSSPPTSKGASDCSLQNGGPEH).

This sequence belongs to the protein kinase superfamily. Tyr protein kinase family. Insulin receptor subfamily. In terms of assembly, probable tetramer of 2 alpha and 2 beta chains linked by disulfide bonds. The alpha chains contribute to the formation of the ligand-binding domain, while the beta chains carry the kinase domain. In terms of processing, autophosphorylated on tyrosine residues between pH 7.9 and pH 10.5.

The protein resides in the membrane. The enzyme catalyses L-tyrosyl-[protein] + ATP = O-phospho-L-tyrosyl-[protein] + ADP + H(+). Functionally, receptor with tyrosine-protein kinase activity. Functions as a pH sensing receptor which is activated by increased extracellular pH. Activates an intracellular signaling pathway that involves IRS1 and AKT1/PKB. The chain is Insulin receptor-related protein (INSRR) from Cavia porcellus (Guinea pig).